The following is a 482-amino-acid chain: UDP-N-acetylmuramate--L-alanine ligase (482 aa).

Position 119-125 (119-125) interacts with ATP; sequence GTHGKTT.

Belongs to the MurCDEF family.

It localises to the cytoplasm. The catalysed reaction is UDP-N-acetyl-alpha-D-muramate + L-alanine + ATP = UDP-N-acetyl-alpha-D-muramoyl-L-alanine + ADP + phosphate + H(+). Its pathway is cell wall biogenesis; peptidoglycan biosynthesis. Its function is as follows. Cell wall formation. This is UDP-N-acetylmuramate--L-alanine ligase from Cyanothece sp. (strain PCC 7425 / ATCC 29141).